Reading from the N-terminus, the 516-residue chain is Histidine ammonia-lyase 1 (516 aa).

The 5-imidazolinone (Ser-Gly) cross-link spans 147 to 149; it reads SSG. A 2,3-didehydroalanine (Ser) modification is found at S148.

This sequence belongs to the PAL/histidase family. In terms of processing, contains an active site 4-methylidene-imidazol-5-one (MIO), which is formed autocatalytically by cyclization and dehydration of residues Ser-Ser-Gly.

The protein resides in the cytoplasm. The catalysed reaction is L-histidine = trans-urocanate + NH4(+). The protein operates within amino-acid degradation; L-histidine degradation into L-glutamate; N-formimidoyl-L-glutamate from L-histidine: step 1/3. In Fusobacterium nucleatum subsp. nucleatum (strain ATCC 25586 / DSM 15643 / BCRC 10681 / CIP 101130 / JCM 8532 / KCTC 2640 / LMG 13131 / VPI 4355), this protein is Histidine ammonia-lyase 1 (hutH1).